The chain runs to 231 residues: Protein APE_1056.1 (231 aa).

In terms of domain architecture, AMMECR1 spans 29-214; it reads VRIARRAVEE…ETEPRGPVVR (186 aa).

The sequence is that of Protein APE_1056.1 from Aeropyrum pernix (strain ATCC 700893 / DSM 11879 / JCM 9820 / NBRC 100138 / K1).